The following is a 303-amino-acid chain: uncharacterized protein (303 aa).

This is an uncharacterized protein from Rickettsia prowazekii (strain Madrid E).